The chain runs to 86 residues: Weak neurotoxin 5 (86 aa).

A signal peptide spans 1-21 (MKTLLLTLVVVTIVCLDLGYT). 5 disulfides stabilise this stretch: C24-C45, C27-C32, C38-C63, C67-C78, and C79-C84.

It belongs to the three-finger toxin family. Ancestral subfamily. Orphan group II sub-subfamily. As to expression, expressed by the venom gland.

It localises to the secreted. In terms of biological role, binds with low affinity to muscular and very low affinity to neuronal (alpha-7/CHRNA7) nicotinic acetylcholine receptor (nAChR). The sequence is that of Weak neurotoxin 5 from Naja sputatrix (Malayan spitting cobra).